The sequence spans 354 residues: Nicotinate-nucleotide--dimethylbenzimidazole phosphoribosyltransferase (354 aa).

Glutamate 317 serves as the catalytic Proton acceptor.

Belongs to the CobT family. In terms of assembly, homodimer.

The enzyme catalyses 5,6-dimethylbenzimidazole + nicotinate beta-D-ribonucleotide = alpha-ribazole 5'-phosphate + nicotinate + H(+). It participates in nucleoside biosynthesis; alpha-ribazole biosynthesis; alpha-ribazole from 5,6-dimethylbenzimidazole: step 1/2. In terms of biological role, catalyzes the synthesis of alpha-ribazole-5'-phosphate from nicotinate mononucleotide (NAMN) and 5,6-dimethylbenzimidazole (DMB). This chain is Nicotinate-nucleotide--dimethylbenzimidazole phosphoribosyltransferase, found in Salmonella arizonae (strain ATCC BAA-731 / CDC346-86 / RSK2980).